The primary structure comprises 93 residues: Integration host factor subunit beta (93 aa).

The protein belongs to the bacterial histone-like protein family. Heterodimer of an alpha and a beta chain.

In terms of biological role, this protein is one of the two subunits of integration host factor, a specific DNA-binding protein that functions in genetic recombination as well as in transcriptional and translational control. This Rhodospirillum centenum (strain ATCC 51521 / SW) protein is Integration host factor subunit beta.